Here is a 295-residue protein sequence, read N- to C-terminus: ATP synthase gamma chain (295 aa).

This sequence belongs to the ATPase gamma chain family. F-type ATPases have 2 components, CF(1) - the catalytic core - and CF(0) - the membrane proton channel. CF(1) has five subunits: alpha(3), beta(3), gamma(1), delta(1), epsilon(1). CF(0) has three main subunits: a, b and c.

The protein resides in the cell inner membrane. Functionally, produces ATP from ADP in the presence of a proton gradient across the membrane. The gamma chain is believed to be important in regulating ATPase activity and the flow of protons through the CF(0) complex. This Cytophaga hutchinsonii (strain ATCC 33406 / DSM 1761 / CIP 103989 / NBRC 15051 / NCIMB 9469 / D465) protein is ATP synthase gamma chain.